The sequence spans 314 residues: Pantothenate kinase (314 aa).

Position 93–100 (93–100 (GSVAVGKS)) interacts with ATP.

Belongs to the prokaryotic pantothenate kinase family.

The protein resides in the cytoplasm. It catalyses the reaction (R)-pantothenate + ATP = (R)-4'-phosphopantothenate + ADP + H(+). Its pathway is cofactor biosynthesis; coenzyme A biosynthesis; CoA from (R)-pantothenate: step 1/5. In Shewanella denitrificans (strain OS217 / ATCC BAA-1090 / DSM 15013), this protein is Pantothenate kinase.